A 387-amino-acid polypeptide reads, in one-letter code: Phosphoglycerate kinase (387 aa).

Substrate is bound by residues 21-23, Arg-36, 59-62, Arg-113, and Arg-146; these read DLN and HLGR. ATP contacts are provided by residues Lys-197, Glu-314, and 340–343; that span reads GGDT.

It belongs to the phosphoglycerate kinase family. In terms of assembly, monomer.

It localises to the cytoplasm. The catalysed reaction is (2R)-3-phosphoglycerate + ATP = (2R)-3-phospho-glyceroyl phosphate + ADP. Its pathway is carbohydrate degradation; glycolysis; pyruvate from D-glyceraldehyde 3-phosphate: step 2/5. The polypeptide is Phosphoglycerate kinase (Pseudomonas fluorescens (strain ATCC BAA-477 / NRRL B-23932 / Pf-5)).